The following is a 1333-amino-acid chain: ABC transporter ATP-binding protein/permease PDR18 (1333 aa).

Residues 13-33 (FLEGQTFGDILCLPWTIIKGI) traverse the membrane as a helical segment. The ABC transporter 1 domain maps to 30 to 281 (IKGIRERKNR…FENMGYLCPP (252 aa)). 4 N-linked (GlcNAc...) asparagine glycosylation sites follow: Asn-48, Asn-144, Asn-205, and Asn-350. 6 helical membrane-spanning segments follow: residues 392 to 412 (YTVINTCAAIAQAFITGSLFY), 425 to 445 (SGVLFFSLLYYSLMGLANISF), 474 to 494 (FPFRMIGLTFFIIILYFLAGL), 499 to 519 (GAFFTMYLLLTMCSEAITSLF), 534 to 554 (SIAGVVMLSIAMYSTYMIQLP), and 642 to 662 (FGIMWCFLIGYIVLRAVFTEY). Residues Asn-697 and Asn-733 are each glycosylated (N-linked (GlcNAc...) asparagine). Residues 729–971 (FIWKNVSFTI…VIKYFEKNGA (243 aa)) enclose the ABC transporter 2 domain. 765 to 772 (GESGAGKT) is a binding site for ATP. N-linked (GlcNAc...) asparagine glycosylation occurs at Asn-958. A run of 6 helical transmembrane segments spans residues 1071–1091 (LLMISGLFIGFTFFHVGVNAI), 1092–1112 (GLQNSLFACFMAIVISAPATN), 1150–1170 (PYHLLFSTIFFVSSYFPLGVF), 1178–1198 (VFYLNYAILFQLYYIGLALMI), 1210–1230 (VIVGFILSFLLSFCGAVQPAS), and 1235–1255 (FWTFMWKLSPYTYFLQNLVGL). An N-linked (GlcNAc...) asparagine glycan is attached at Asn-1320.

The protein belongs to the ABC transporter superfamily. ABCG family. PDR (TC 3.A.1.205) subfamily.

The protein localises to the membrane. The chain is ABC transporter ATP-binding protein/permease PDR18 (PDR18) from Saccharomyces cerevisiae (strain ATCC 204508 / S288c) (Baker's yeast).